The following is a 209-amino-acid chain: Large ribosomal subunit protein uL3 (209 aa).

A disordered region spans residues 128 to 163 (FGGGSRTHGQSDRLRAPGSVGGSSDPSRTFRGTRMA).

The protein belongs to the universal ribosomal protein uL3 family. In terms of assembly, part of the 50S ribosomal subunit. Forms a cluster with proteins L14 and L19.

In terms of biological role, one of the primary rRNA binding proteins, it binds directly near the 3'-end of the 23S rRNA, where it nucleates assembly of the 50S subunit. The sequence is that of Large ribosomal subunit protein uL3 from Chlorobium phaeobacteroides (strain DSM 266 / SMG 266 / 2430).